The chain runs to 509 residues: Maturase K (509 aa).

The protein belongs to the intron maturase 2 family. MatK subfamily.

The protein localises to the plastid. The protein resides in the chloroplast. Usually encoded in the trnK tRNA gene intron. Probably assists in splicing its own and other chloroplast group II introns. The chain is Maturase K from Citrus sinensis (Sweet orange).